The following is a 136-amino-acid chain: Histone H3 (136 aa).

The disordered stretch occupies residues 1 to 42 (MARTKQTARKSTGGKAPRKQLATKAAAKSAPATGGVKKPHRY). Lysine 5 is subject to N6-methylated lysine. Position 10 is an N6-acetyllysine; alternate (lysine 10). At lysine 10 the chain carries N6-methylated lysine; alternate. Residue serine 11 is modified to Phosphoserine. Residues lysine 15 and lysine 24 each carry the N6-acetyllysine modification. A compositionally biased stretch (low complexity) spans 22-33 (ATKAAAKSAPAT). Residues lysine 28, lysine 37, and lysine 80 each carry the N6-methylated lysine modification.

Belongs to the histone H3 family. The nucleosome is a histone octamer containing two molecules each of H2A, H2B, H3 and H4 assembled in one H3-H4 heterotetramer and two H2A-H2B heterodimers. The octamer wraps approximately 147 bp of DNA. Post-translationally, acetylation is generally linked to gene activation. Methylation at Lys-5 is linked to gene activation. Methylation at Lys-10 is linked to gene repression.

The protein resides in the nucleus. Its subcellular location is the chromosome. Functionally, core component of nucleosome. Nucleosomes wrap and compact DNA into chromatin, limiting DNA accessibility to the cellular machineries which require DNA as a template. Histones thereby play a central role in transcription regulation, DNA repair, DNA replication and chromosomal stability. DNA accessibility is regulated via a complex set of post-translational modifications of histones, also called histone code, and nucleosome remodeling. This is Histone H3 from Acropora formosa (Staghorn coral).